The sequence spans 108 residues: UPF0102 protein SO_0299 (108 aa).

It belongs to the UPF0102 family.

The chain is UPF0102 protein SO_0299 from Shewanella oneidensis (strain ATCC 700550 / JCM 31522 / CIP 106686 / LMG 19005 / NCIMB 14063 / MR-1).